We begin with the raw amino-acid sequence, 491 residues long: Zinc finger and SCAN domain-containing protein 22 (491 aa).

Phosphoserine is present on Ser-9. The 83-residue stretch at 49-131 (RLRFRHFRYE…VLVEDLTQVL (83 aa)) folds into the SCAN box domain. Disordered regions lie at residues 134 to 161 (RGWD…SNVT) and 204 to 249 (FKKT…DKFD). The span at 214 to 224 (VPTDQRGRESG) shows a compositional bias: basic and acidic residues. Polar residues predominate over residues 225 to 241 (ASRNSSSAWPNLTSQEK). 8 C2H2-type zinc fingers span residues 268 to 290 (SKCR…QKTH), 296 to 318 (YACS…QVVH), 324 to 346 (HECK…QRIH), 352 to 374 (YKCG…QRVH), 380 to 402 (YECD…QRIH), 408 to 430 (YKCD…LRIH), 436 to 458 (YQCK…QRIH), and 464 to 486 (YKCS…LRIH). A Glycyl lysine isopeptide (Lys-Gly) (interchain with G-Cter in SUMO2) cross-link involves residue Lys-443.

The protein belongs to the krueppel C2H2-type zinc-finger protein family.

It is found in the nucleus. May be involved in transcriptional regulation. In Homo sapiens (Human), this protein is Zinc finger and SCAN domain-containing protein 22 (ZSCAN22).